The chain runs to 107 residues: EPIDERMAL PATTERNING FACTOR-like protein 5 (107 aa).

Positions 1 to 22 (MGVVLPTLIVYAFLLFFSSSSA) are cleaved as a signal peptide. Cystine bridges form between cysteine 64–cysteine 98, cysteine 68–cysteine 74, and cysteine 71–cysteine 100.

This sequence belongs to the plant cysteine rich small secretory peptide family. Epidermal patterning factor subfamily. In terms of assembly, interacts with ERECTA. Expressed asymetically in the hypocotyl, on the side proximal to the folded cotyledons at germination. Detected in developing flowers, the chalazal region of ovules and near the root apex, but not in inflorescence stems. Expressed in cotyledons, flowers, adult leaves and fruits.

The protein localises to the secreted. Controls stomatal patterning. Mediates differentiation of stomatal lineage cells to pavement cells and stomatal development inhibition. TMM (AC Q9SSD1) functions to dampen or block CLL1 signaling. Acts as a growth-regulatory ligand for ERECTA family receptors. Promotes fruit growth and fertility. This chain is EPIDERMAL PATTERNING FACTOR-like protein 5, found in Arabidopsis thaliana (Mouse-ear cress).